We begin with the raw amino-acid sequence, 162 residues long: Dihydrofolate reductase (162 aa).

The DHFR domain occupies 3 to 161 (KITLIAACAE…TSYAFVHYLR (159 aa)). Residue 7 to 9 (IAA) coordinates substrate. NADP(+)-binding positions include 8-9 (AA) and 16-21 (IGAGNA). Aspartate 29 is a binding site for substrate. 45–48 (GRKT) contacts NADP(+). Arginine 60 serves as a coordination point for substrate. Residues 65 to 68 (ISRQ) and 98 to 103 (MGGAQI) each bind NADP(+). A substrate-binding site is contributed by threonine 117.

The protein belongs to the dihydrofolate reductase family.

The enzyme catalyses (6S)-5,6,7,8-tetrahydrofolate + NADP(+) = 7,8-dihydrofolate + NADPH + H(+). Its pathway is cofactor biosynthesis; tetrahydrofolate biosynthesis; 5,6,7,8-tetrahydrofolate from 7,8-dihydrofolate: step 1/1. Functionally, key enzyme in folate metabolism. Catalyzes an essential reaction for de novo glycine and purine synthesis, and for DNA precursor synthesis. In Neisseria meningitidis serogroup A / serotype 4A (strain DSM 15465 / Z2491), this protein is Dihydrofolate reductase (folA).